The following is a 1006-amino-acid chain: uncharacterized protein (1006 aa).

The tract at residues 326–371 (EMEKKRPRSPELVPKKIVMEKERPSSPDSEAEEREHNLRIEKERHQ) is disordered. 2 stretches are compositionally biased toward basic and acidic residues: residues 338–350 (VPKK…ERPS) and 358–371 (EREH…ERHQ). 2 coiled-coil regions span residues 358–473 (EREH…ARLA) and 756–782 (EVQK…AFGR).

This is an uncharacterized protein from Caenorhabditis elegans.